We begin with the raw amino-acid sequence, 142 residues long: Large ribosomal subunit protein uL11 (142 aa).

It belongs to the universal ribosomal protein uL11 family. In terms of assembly, part of the ribosomal stalk of the 50S ribosomal subunit. Interacts with L10 and the large rRNA to form the base of the stalk. L10 forms an elongated spine to which L12 dimers bind in a sequential fashion forming a multimeric L10(L12)X complex. Post-translationally, one or more lysine residues are methylated.

Its function is as follows. Forms part of the ribosomal stalk which helps the ribosome interact with GTP-bound translation factors. This chain is Large ribosomal subunit protein uL11, found in Vesicomyosocius okutanii subsp. Calyptogena okutanii (strain HA).